Consider the following 436-residue polypeptide: Glutamyl-tRNA reductase (436 aa).

Substrate-binding positions include 49–52, serine 109, 114–116, and glutamine 120; these read TCNR and EGQ. Cysteine 50 serves as the catalytic Nucleophile. 198–203 serves as a coordination point for NADP(+); the sequence is GAGRMS.

Belongs to the glutamyl-tRNA reductase family. In terms of assembly, homodimer.

The enzyme catalyses (S)-4-amino-5-oxopentanoate + tRNA(Glu) + NADP(+) = L-glutamyl-tRNA(Glu) + NADPH + H(+). It participates in porphyrin-containing compound metabolism; protoporphyrin-IX biosynthesis; 5-aminolevulinate from L-glutamyl-tRNA(Glu): step 1/2. The protein operates within porphyrin-containing compound metabolism; chlorophyll biosynthesis. Catalyzes the NADPH-dependent reduction of glutamyl-tRNA(Glu) to glutamate 1-semialdehyde (GSA). This is Glutamyl-tRNA reductase from Prochlorococcus marinus (strain MIT 9301).